The sequence spans 77 residues: Acyl carrier protein (77 aa).

Residues Met-1–Gly-76 form the Carrier domain. Ser-36 carries the O-(pantetheine 4'-phosphoryl)serine modification.

The protein belongs to the acyl carrier protein (ACP) family. 4'-phosphopantetheine is transferred from CoA to a specific serine of apo-ACP by AcpS. This modification is essential for activity because fatty acids are bound in thioester linkage to the sulfhydryl of the prosthetic group.

It localises to the cytoplasm. The protein operates within lipid metabolism; fatty acid biosynthesis. In terms of biological role, carrier of the growing fatty acid chain in fatty acid biosynthesis. This Campylobacter concisus (strain 13826) protein is Acyl carrier protein.